The chain runs to 594 residues: Potassium-transporting ATPase potassium-binding subunit (594 aa).

Helical transmembrane passes span 4-24 (QFFGLLVFYLAILLILAPFLG), 65-85 (QYAVAVLIFSVLGFIAVYALQ), 136-156 (ALTVQNFLSAAVGMSVLFALI), 179-199 (LYVLLPLALALALALVSQGVI), 287-307 (LEMLAILIIPAALCFTFGEMV), 314-334 (VAILAAMTLLFVGLAWLTQNA), 361-381 (FGVAASALFAVVTTAASCGAV), 390-410 (AMGGLGPMLLMQLGEVVFGGV), 413-433 (GLYGMLAFALLGVFIAGLMIG), 450-470 (MVSIAILVTPFLVLAGTALAV), 518-538 (LLGLAMWFGRFLVIVAILALA), and 560-580 (LFIVLLIGTVLLVGALTYVPA).

The protein belongs to the KdpA family. In terms of assembly, the system is composed of three essential subunits: KdpA, KdpB and KdpC.

The protein resides in the cell inner membrane. Part of the high-affinity ATP-driven potassium transport (or Kdp) system, which catalyzes the hydrolysis of ATP coupled with the electrogenic transport of potassium into the cytoplasm. This subunit binds the periplasmic potassium ions and delivers the ions to the membrane domain of KdpB through an intramembrane tunnel. This Bordetella avium (strain 197N) protein is Potassium-transporting ATPase potassium-binding subunit.